The chain runs to 440 residues: MSLSNKTVKELRQLLKERYTVEDELTESIALSSMRFKPSQEPEFHALSQSSLLKTKLKQQSSTDIPSYTHVLISKLSCEKITHYAVRGGNIEIMGILMGFTLKDNIVVMDCFNLPVVGTETRVNAQLESYEYMVQYIDEMYNHNDGGDGRDYKGAKLNVVGWFHSHPGYDCWLSNIDIQTQDLNQRFQDPYVAIVVDPLKSLEDKILRMGAFRTIESKSDDNSATSYYELETIIFDSELNRALFETKLNLHCVIEDDESEQISLNRLIDSMKQYSYLMDSKNVRTRIKLATTSERVSNENKKNIDYQNRSTRSQFCLNTQRGDSTETSSFGSMFSGDNTSDVDMEDRNLTEFDSTDTSLCINGEPSIHVNRVERSSRSTDNFHNSKKRMNSNQEKCHDEGNDMLQRNVLETDYARAKNRILASKIKQYERLRFYKDTFTL.

In terms of domain architecture, MPN spans 71 to 218; sequence VLISKLSCEK…MGAFRTIESK (148 aa). The Zn(2+) site is built by histidine 164, histidine 166, and aspartate 177. Positions 164–177 match the JAMM motif motif; it reads HSHPGYDCWLSNID. The segment covering 319–341 has biased composition (polar residues); it reads TQRGDSTETSSFGSMFSGDNTSD. Disordered regions lie at residues 319-343 and 376-400; these read TQRGDSTETSSFGSMFSGDNTSDVD and SRSTDNFHNSKKRMNSNQEKCHDEG.

Belongs to the peptidase M67A family. CSN5 subfamily. Component of a COP9 signalosome-like (CSN) complex, composed of at least RRI1/CSN5, CSN9, RRI2/CSN10, PCI8/CSN11, CSN12 and CSI1. Within this complex it probably interacts directly with CSN12. Also interacts with RPN5. The cofactor is a divalent metal cation.

Its subcellular location is the cytoplasm. The protein resides in the nucleus. Catalytic component of the COP9 signalosome (CSN) complex that acts as an regulator of the ubiquitin (Ubl) conjugation pathway by mediating the deneddylation of the cullin subunit of SCF-type E3 ubiquitin-protein ligase complexes. The CSN complex is involved in the regulation of the mating pheromone response. This Saccharomyces cerevisiae (strain YJM789) (Baker's yeast) protein is COP9 signalosome complex subunit 5 (RRI1).